A 61-amino-acid polypeptide reads, in one-letter code: Small ribosomal subunit protein uS14B (61 aa).

Zn(2+)-binding residues include Cys24, Cys27, Cys40, and Cys43.

The protein belongs to the universal ribosomal protein uS14 family. Zinc-binding uS14 subfamily. Part of the 30S ribosomal subunit. Contacts proteins S3 and S10. Requires Zn(2+) as cofactor.

Functionally, binds 16S rRNA, required for the assembly of 30S particles and may also be responsible for determining the conformation of the 16S rRNA at the A site. The sequence is that of Small ribosomal subunit protein uS14B from Streptomyces avermitilis (strain ATCC 31267 / DSM 46492 / JCM 5070 / NBRC 14893 / NCIMB 12804 / NRRL 8165 / MA-4680).